Here is a 478-residue protein sequence, read N- to C-terminus: Stromelysin-1 (478 aa).

Residues 1–17 form the signal peptide; sequence MQNLPALLLFCGVVCSA. Positions 18–99 are cleaved as a propeptide — activation peptide; it reads YPVDRAAEDE…PRCGVPDVGD (82 aa). A Cysteine switch motif is present at residues 90-97; sequence PRCGVPDV. C92 contributes to the Zn(2+) binding site. Residues D124 and D158 each coordinate Ca(2+). H168 and D170 together coordinate Zn(2+). D175, G176, G178, and V180 together coordinate Ca(2+). H183 is a Zn(2+) binding site. G190 and D194 together coordinate Ca(2+). H196 serves as a coordination point for Zn(2+). Ca(2+) is bound by residues D198, D199, and E201. H218 contributes to the Zn(2+) binding site. The active site involves E219. H222 and H228 together coordinate Zn(2+). Residues 260–286 form a disordered region; that stretch reads QSLYGGPPSDSSNDPVVPTESVPPGPG. Positions 266–277 are enriched in low complexity; the sequence is PPSDSSNDPVVP. 4 Hemopexin repeats span residues 288 to 337, 338 to 384, 386 to 434, and 435 to 478; these read PAAC…WPSL, PSGL…GFPP, VKKI…FPGV, and DSKV…WLNC. C291 and C478 are oxidised to a cystine. D298 serves as a coordination point for Ca(2+). Residues D390 and D439 each coordinate Ca(2+). The N-linked (GlcNAc...) asparagine glycan is linked to N452.

It belongs to the peptidase M10A family. The cofactor is Ca(2+). Requires Zn(2+) as cofactor.

It is found in the secreted. Its subcellular location is the extracellular space. The protein localises to the extracellular matrix. The catalysed reaction is Preferential cleavage where P1', P2' and P3' are hydrophobic residues.. In terms of biological role, metalloproteinase with a rather broad substrate specificity that can degrade fibronectin, laminin, gelatins of type I, III, IV, and V; collagens III, IV, X, and IX, and cartilage proteoglycans. Activates different molecules including growth factors, plasminogen or other matrix metalloproteinases such as MMP9. Once released into the extracellular matrix (ECM), the inactive pro-enzyme is activated by the plasmin cascade signaling pathway. Also acts intracellularly. For example, in dopaminergic neurons, gets activated by the serine protease HTRA2 upon stress and plays a pivotal role in DA neuronal degeneration by mediating microglial activation and alpha-synuclein/SNCA cleavage. In addition, plays a role in immune response and possesses antiviral activity against various viruses. Mechanistically, translocates from the cytoplasm into the cell nucleus upon virus infection to influence NF-kappa-B activities. The sequence is that of Stromelysin-1 (MMP3) from Canis lupus familiaris (Dog).